We begin with the raw amino-acid sequence, 154 residues long: Large ribosomal subunit protein uL13 (154 aa).

It belongs to the universal ribosomal protein uL13 family. Part of the 50S ribosomal subunit.

Its function is as follows. This protein is one of the early assembly proteins of the 50S ribosomal subunit, although it is not seen to bind rRNA by itself. It is important during the early stages of 50S assembly. The protein is Large ribosomal subunit protein uL13 of Allorhizobium ampelinum (strain ATCC BAA-846 / DSM 112012 / S4) (Agrobacterium vitis (strain S4)).